The primary structure comprises 1314 residues: Phosphoribosylformylglycinamidine synthase (1314 aa).

ATP-binding positions include 307–318 (GAATGAGGEIRD) and Ala674. Asp675, Glu714, Asn718, and Asp880 together coordinate Mg(2+). ATP is bound at residue Ser882. Residues 1063-1314 (IAILREQGVN…LFAGARKALG (252 aa)) enclose the Glutamine amidotransferase type-1 domain. Catalysis depends on Cys1156, which acts as the Nucleophile. Residues His1279 and Glu1281 contribute to the active site.

This sequence in the N-terminal section; belongs to the FGAMS family. Monomer.

It is found in the cytoplasm. The catalysed reaction is N(2)-formyl-N(1)-(5-phospho-beta-D-ribosyl)glycinamide + L-glutamine + ATP + H2O = 2-formamido-N(1)-(5-O-phospho-beta-D-ribosyl)acetamidine + L-glutamate + ADP + phosphate + H(+). It functions in the pathway purine metabolism; IMP biosynthesis via de novo pathway; 5-amino-1-(5-phospho-D-ribosyl)imidazole from N(2)-formyl-N(1)-(5-phospho-D-ribosyl)glycinamide: step 1/2. Phosphoribosylformylglycinamidine synthase involved in the purines biosynthetic pathway. Catalyzes the ATP-dependent conversion of formylglycinamide ribonucleotide (FGAR) and glutamine to yield formylglycinamidine ribonucleotide (FGAM) and glutamate. The protein is Phosphoribosylformylglycinamidine synthase of Neisseria gonorrhoeae (strain ATCC 700825 / FA 1090).